Consider the following 25-residue polypeptide: Ocellatin-K1 (25 aa).

Ile25 bears the Isoleucine amide mark.

In terms of tissue distribution, expressed by the skin glands.

The protein resides in the secreted. Functionally, has hemolytic and antibacterial activity. The chain is Ocellatin-K1 from Leptodactylus knudseni (Knudsen's thin-toed frog).